Reading from the N-terminus, the 1068-residue chain is Target of Nesh-SH3 (1068 aa).

The signal sequence occupies residues 1–21 (MLSSLGCLLLCGSITLALGNA). A glycan (N-linked (GlcNAc...) asparagine) is linked at asparagine 37. The Fibronectin type-III 1 domain maps to 116–214 (KPLQLVVGTL…KIFNHKTVVG (99 aa)). Disordered regions lie at residues 315–351 (SKTP…DVSE) and 384–811 (VFSS…SITD). Residues 326–339 (RPTTVTPETVPRST) are compositionally biased toward low complexity. The segment covering 340-351 (KPTTSSALDVSE) has biased composition (polar residues). Over residues 447–462 (QPTTPAPQQTTSIPST) the composition is skewed to low complexity. Residues 463–473 (PKRRPRPKPPR) are compositionally biased toward basic residues. The segment covering 482-499 (AGTITPKISKSPEPTWTT) has biased composition (polar residues). Pro residues predominate over residues 532–544 (RAPPKPKTSPRPR). Polar residues predominate over residues 562-574 (PKTSPSPEVSYTT). Low complexity-rich tracts occupy residues 603-631 (IPFI…STQE) and 737-750 (PPLR…GTPL). Over residues 802–811 (PDNSPCSITD) the composition is skewed to polar residues. In terms of domain architecture, Fibronectin type-III 2 spans 833–926 (PPTNLTVVTV…NTVAFSTESA (94 aa)).

In terms of assembly, probably interacts with ABI3. In terms of tissue distribution, expressed in brain, heart, lung, liver, pancreas kidney and placenta.

It is found in the secreted. The chain is Target of Nesh-SH3 from Homo sapiens (Human).